The sequence spans 104 residues: Endogenous retrovirus group K member 21 Rec protein (104 aa).

The segment at 1–48 (MHPSEMQRKAPPRRRRHRNRAPLTHKMNKMVTSEQMKLPSTKKAEPPT) is disordered. The span at 10–20 (APPRRRRHRNR) shows a compositional bias: basic residues. Positions 13–20 (RRRRHRNR) match the Nuclear localization signal motif. Positions 49-58 (WAQLKKLTQL) match the Nuclear export signal motif.

Forms homodimers, homotrimers, and homotetramers via a C-terminal domain. Associates with XPO1 and with ZNF145.

The protein localises to the cytoplasm. The protein resides in the nucleus. It localises to the nucleolus. Its function is as follows. Retroviral replication requires the nuclear export and translation of unspliced, singly-spliced and multiply-spliced derivatives of the initial genomic transcript. Rec interacts with a highly structured RNA element (RcRE) present in the viral 3'LTR and recruits the cellular nuclear export machinery. This permits export to the cytoplasm of unspliced genomic or incompletely spliced subgenomic viral transcripts. The sequence is that of Endogenous retrovirus group K member 21 Rec protein (ERVK-21) from Homo sapiens (Human).